The primary structure comprises 130 residues: MSDPLGDMLTRIRNAQRARHAVCVAPASNLRANVLDVLKREGFIRGFSKEELRPGVAQLRIELKYNDGEPVIKEITRVSRPGRRVYSKIKELPRVYAGLGVSILSTPRGVMSDVEARTANVGGEVLCRVF.

Belongs to the universal ribosomal protein uS8 family. Part of the 30S ribosomal subunit. Contacts proteins S5 and S12.

Functionally, one of the primary rRNA binding proteins, it binds directly to 16S rRNA central domain where it helps coordinate assembly of the platform of the 30S subunit. The sequence is that of Small ribosomal subunit protein uS8 from Acidiphilium cryptum (strain JF-5).